The following is a 317-amino-acid chain: Type II methyltransferase M.MgeORF184P (317 aa).

Belongs to the N(4)/N(6)-methyltransferase family.

It catalyses the reaction a 2'-deoxyadenosine in DNA + S-adenosyl-L-methionine = an N(6)-methyl-2'-deoxyadenosine in DNA + S-adenosyl-L-homocysteine + H(+). Functionally, probably recognizes the double-stranded sequence 5'-CTAT-3' and methylates A-3 on only one strand; as the bacterial DNA is methylated on this sequence and this is the only type II methylase in the genome, it is probably responsible for all of the methylation on this site in the genome. The protein is Type II methyltransferase M.MgeORF184P of Mycoplasma genitalium (strain ATCC 33530 / DSM 19775 / NCTC 10195 / G37) (Mycoplasmoides genitalium).